A 513-amino-acid polypeptide reads, in one-letter code: Maturase K (513 aa).

It belongs to the intron maturase 2 family. MatK subfamily.

The protein localises to the plastid. The protein resides in the chloroplast. Functionally, usually encoded in the trnK tRNA gene intron. Probably assists in splicing its own and other chloroplast group II introns. The chain is Maturase K from Sporobolus indicus (Smut grass).